The primary structure comprises 179 residues: Replication restart protein DnaT (179 aa).

Positions 151-168 (SRSSNGGMPQRDINSVSE) are enriched in polar residues. Residues 151-179 (SRSSNGGMPQRDINSVSEPDNHIPPGFRG) are disordered.

Belongs to the DnaT family. Homooligomerizes. Interacts with PriB. Component of the replication restart primosome. Primosome assembly occurs via a 'hand-off' mechanism. PriA binds to replication forks, subsequently PriB then DnaT bind; DnaT then displaces ssDNA to generate the helicase loading substrate.

Functionally, involved in the restart of stalled replication forks, which reloads the replicative helicase on sites other than the origin of replication. Can function in multiple replication restart pathways. Displaces ssDNA from a PriB-ssDNA complex. Probably forms a spiral filament on ssDNA. This is Replication restart protein DnaT from Salmonella heidelberg (strain SL476).